The sequence spans 164 residues: Peptide methionine sulfoxide reductase MsrA (164 aa).

The active site involves C16.

The protein belongs to the MsrA Met sulfoxide reductase family.

It carries out the reaction L-methionyl-[protein] + [thioredoxin]-disulfide + H2O = L-methionyl-(S)-S-oxide-[protein] + [thioredoxin]-dithiol. The enzyme catalyses [thioredoxin]-disulfide + L-methionine + H2O = L-methionine (S)-S-oxide + [thioredoxin]-dithiol. Functionally, has an important function as a repair enzyme for proteins that have been inactivated by oxidation. Catalyzes the reversible oxidation-reduction of methionine sulfoxide in proteins to methionine. The chain is Peptide methionine sulfoxide reductase MsrA from Methanoculleus marisnigri (strain ATCC 35101 / DSM 1498 / JR1).